Here is a 248-residue protein sequence, read N- to C-terminus: Probable transcriptional regulatory protein PSPTO_3980 (248 aa).

The protein belongs to the TACO1 family.

Its subcellular location is the cytoplasm. The protein is Probable transcriptional regulatory protein PSPTO_3980 of Pseudomonas syringae pv. tomato (strain ATCC BAA-871 / DC3000).